A 440-amino-acid polypeptide reads, in one-letter code: Discs overgrown protein kinase (440 aa).

A Protein kinase domain is found at 9 to 277 (YRLGRKIGSG…HLRKLFRNLF (269 aa)). Residues 15–23 (IGSGSFGDI) and K38 each bind ATP. D128 (proton acceptor) is an active-site residue. The nuclear localization signal; essential for interaction with Bdbt and important for nuclear localization stretch occupies residues 221–224 (KRQK). Phosphoserine is present on residues S333 and S334. Residues 376 to 440 (SQLIGGNGLN…GGGGGVGNAK (65 aa)) form a disordered region. Positions 413–440 (QGGGGGGGGVGVGGMPSGGGGGGVGNAK) are enriched in gly residues.

It belongs to the protein kinase superfamily. CK1 Ser/Thr protein kinase family. Casein kinase I subfamily. In terms of assembly, forms a complex with per. Interacts with Dlish. Interacts (via nuclear localization signal) with Bdbt. As to expression, detected in the head (at protein level). Expressed in photoreceptor cells of the eyes as well as in the region situated between the optic lobe and the central brain.

It is found in the nucleus. The protein localises to the cytoplasm. Its subcellular location is the cytosol. It catalyses the reaction L-seryl-[protein] + ATP = O-phospho-L-seryl-[protein] + ADP + H(+). The enzyme catalyses L-threonyl-[protein] + ATP = O-phospho-L-threonyl-[protein] + ADP + H(+). Functionally, serine/threonine-protein kinase which is involved in the circadian rhythm pathway, viability and planar cell polarity. In the circadian rhythm pathway, phosphorylates the clock gene period (per) and targets it for degradation in the absence of timeless (tim), thus contributing to production of the circadian oscillations of the clock genes. Together with CkIalpha, regulates processing of ci by phosphorylating it, which promotes its binding to slmb, the F-box recognition component of the SCF(slmb) E3 ubiquitin-protein ligase. Involved in the inhibition of apoptosis during cell proliferation and growth arrest in imaginal disks. Also functions in planar cell polarity. This chain is Discs overgrown protein kinase (dco), found in Drosophila melanogaster (Fruit fly).